A 341-amino-acid chain; its full sequence is MTYRDAGVDIDAGNALVERIKPLVKRSFRPEVMGGLGGFGALFDLSGKYKEPVLVSGTDGVGTKLKLAQQLGRHDTIGIDLVGMCVNDVLVQGAEPLFFLDYFATGKLDIDTAAAVVGGIARGCELSGCALIGGETAEMPDMYPPGEYDLAGFTVGAVEKSQLLDGAQVREGDVLIGIASSGPHSNGYSLIRKIYERAGSPADLVLDDGVALIDALMAPTALYVKPILALLKSHGEAIHAMAHVTGGGLTENIIRVIPDGLGLDIDATAWILPPVFAWLQREGAVADAEMWRTFNCGIGFVLVAAPAQAAALEQALDAQSLAHWRIGQVVTAQGDERVRIG.

It belongs to the AIR synthase family.

It is found in the cytoplasm. It carries out the reaction 2-formamido-N(1)-(5-O-phospho-beta-D-ribosyl)acetamidine + ATP = 5-amino-1-(5-phospho-beta-D-ribosyl)imidazole + ADP + phosphate + H(+). It participates in purine metabolism; IMP biosynthesis via de novo pathway; 5-amino-1-(5-phospho-D-ribosyl)imidazole from N(2)-formyl-N(1)-(5-phospho-D-ribosyl)glycinamide: step 2/2. This is Phosphoribosylformylglycinamidine cyclo-ligase from Xanthomonas campestris pv. campestris (strain 8004).